A 911-amino-acid polypeptide reads, in one-letter code: Alpha-actinin-4 (911 aa).

Positions 1–269 (MVDYHAANQS…YVSSFYHAFS (269 aa)) are actin-binding. The interaction with VCL stretch occupies residues 12–26 (QYGPSSAGNGAGGGG). Y31 carries the phosphotyrosine modification. The segment at 40 to 61 (RDLLLDPAWEKQQRKTFTAWCN) is interaction with VCL. Calponin-homology (CH) domains are found at residues 50–154 (KQQR…LRFA) and 163–269 (TSAK…HAFS). The LXXLL motif signature appears at 84-88 (LMLLL). Residues 108–126 (KINNVNKALDFIASKGVKL) form an interaction with VCL region. An N6-acetyllysine modification is found at K114. The polyphosphoinositide (PIP2)-binding stretch occupies residues 177–192 (TAPYKNVNVQNFHISW). K214 carries the N6-acetyllysine modification. T249 bears the Phosphothreonine mark. Spectrin repeat units follow at residues 293–403 (HLME…WLLN), 413–518 (HLAE…ALEK), 528–639 (QLHL…ALLE), and 649–752 (HLRR…EVEN). An N6-acetyllysine mark is found at K592 and K625. S696 carries the phosphoserine modification. The segment at 736–911 (WEQLLTTIAR…STALYGESDL (176 aa)) is mediates interaction with MICALL2. EF-hand domains lie at 765–800 (EQMQEFRASFNHFDKDHGGALGPEEFKACLISLGYD) and 806–841 (QGEAEFNRIMSLVDPNHSGLVTFQAFIDFMSRETTD). Residue D778 participates in Ca(2+) binding. N6-acetyllysine is present on K779. Residues D780 and E789 each coordinate Ca(2+). K859 is subject to N6-acetyllysine. S909 bears the Phosphoserine mark.

This sequence belongs to the alpha-actinin family. In terms of assembly, homodimer; antiparallel. Binds TRIM3 at the N-terminus. Interacts with MICALL2 (preferentially in opened conformation); stimulated by RAB13 activation. Identified in a complex with CASK, IQGAP1, MAGI2, NPHS1, SPTAN1 and SPTBN1. Identified in a IGF2BP1-dependent mRNP granule complex containing untranslated mRNAs. Component of the CART complex, at least composed of ACTN4, HGS/HRS, MYO5B and TRIM3. Interacts with MAGI1. Interacts with PDLIM2. Interacts with PPARG and RARA. Binds to VCL; this interaction triggers VCL conformational changes. Interacts with SEPTIN14. Interacts with IGSF8. In terms of tissue distribution, widely expressed.

It is found in the nucleus. Its subcellular location is the cytoplasm. The protein localises to the cell junction. The protein resides in the cytoskeleton. It localises to the stress fiber. It is found in the perinuclear region. In terms of biological role, F-actin cross-linking protein which is thought to anchor actin to a variety of intracellular structures. This is a bundling protein. Probably involved in vesicular trafficking via its association with the CART complex. The CART complex is necessary for efficient transferrin receptor recycling but not for EGFR degradation. Involved in tight junction assembly in epithelial cells probably through interaction with MICALL2. Links MICALL2 to the actin cytoskeleton and recruits it to the tight junctions. May also function as a transcriptional coactivator, stimulating transcription mediated by the nuclear hormone receptors PPARG and RARA. Association with IGSF8 regulates the immune synapse formation and is required for efficient T-cell activation. This Homo sapiens (Human) protein is Alpha-actinin-4.